A 437-amino-acid polypeptide reads, in one-letter code: 3-deoxy-D-manno-octulosonic acid transferase (437 aa).

Residues 16–36 form a helical; Signal-anchor membrane-spanning segment; that stretch reads VVLVCAFVIALPKLLYKMLVY. The active-site Proton acceptor is the Glu70. Residues 279–280, 319–321, and 346–349 each bind CMP; these read PR, IGL, and NLLE.

The protein belongs to the glycosyltransferase group 1 family. Glycosyltransferase 30 subfamily.

It localises to the cell inner membrane. It carries out the reaction lipid IVA (E. coli) + CMP-3-deoxy-beta-D-manno-octulosonate = alpha-Kdo-(2-&gt;6)-lipid IVA (E. coli) + CMP + H(+). It catalyses the reaction alpha-Kdo-(2-&gt;6)-lipid IVA (E. coli) + CMP-3-deoxy-beta-D-manno-octulosonate = alpha-Kdo-(2-&gt;4)-alpha-Kdo-(2-&gt;6)-lipid IVA (E. coli) + CMP + H(+). The catalysed reaction is alpha-Kdo-(2-&gt;4)-alpha-Kdo-(2-&gt;6)-lipid IVA (E. coli) + CMP-3-deoxy-beta-D-manno-octulosonate = alpha-Kdo-(2-&gt;8)-alpha-Kdo-(2-&gt;4)-alpha-Kdo-(2-&gt;6)-lipid IVA (E. coli) + CMP + H(+). It functions in the pathway bacterial outer membrane biogenesis; LPS core biosynthesis. In terms of biological role, involved in lipopolysaccharide (LPS) biosynthesis. Catalyzes the transfer of three 3-deoxy-D-manno-octulosonate (Kdo) residues from CMP-Kdo to lipid IV(A), the tetraacyldisaccharide-1,4'-bisphosphate precursor of lipid A. Thus generates the genus-specific LPS epitope of Chlamydia, composed of the trisaccharide alpha-Kdo-(2-&gt;8)-alpha-Kdo-(2-&gt;4)-alpha-Kdo. This Chlamydia pneumoniae (Chlamydophila pneumoniae) protein is 3-deoxy-D-manno-octulosonic acid transferase (waaA).